The sequence spans 248 residues: MKTLILLIQFFTRIPLPVQINMDEINLKKGSALLPFVGVIIGAWNWLIFTLVALLMPLPVAIIAGLFAEIIITGGFHVDALADTADGLFSSRKRERMLEIMKDSRVGANGVIAICFYFLFYGSLFLSVPDTQQIGWLFFVLPIVAKGVTMLLFAKMTYAGSKAGLGSIFLGVPWWPVVIAQVIVLVALGLFFSYIGVIAYAGVILFTIIYRAFVYKRIGGMNGDTLGAGGQMGQLICLFCLVLLWGLI.

7 consecutive transmembrane segments (helical) span residues 24–44 (EINLKKGSALLPFVGVIIGAW), 70–90 (IIITGGFHVDALADTADGLFS), 106–126 (VGANGVIAICFYFLFYGSLFL), 134–154 (IGWLFFVLPIVAKGVTMLLFA), 157–177 (TYAGSKAGLGSIFLGVPWWPV), 188–210 (LGLFFSYIGVIAYAGVILFTIIY), and 228–248 (AGGQMGQLICLFCLVLLWGLI).

Belongs to the CobS family. Mg(2+) is required as a cofactor.

The protein localises to the cell membrane. The enzyme catalyses alpha-ribazole + adenosylcob(III)inamide-GDP = adenosylcob(III)alamin + GMP + H(+). The catalysed reaction is alpha-ribazole 5'-phosphate + adenosylcob(III)inamide-GDP = adenosylcob(III)alamin 5'-phosphate + GMP + H(+). It functions in the pathway cofactor biosynthesis; adenosylcobalamin biosynthesis; adenosylcobalamin from cob(II)yrinate a,c-diamide: step 7/7. Functionally, joins adenosylcobinamide-GDP and alpha-ribazole to generate adenosylcobalamin (Ado-cobalamin). Also synthesizes adenosylcobalamin 5'-phosphate from adenosylcobinamide-GDP and alpha-ribazole 5'-phosphate. The sequence is that of Adenosylcobinamide-GDP ribazoletransferase from Listeria monocytogenes serotype 4b (strain CLIP80459).